The sequence spans 211 residues: Cytochrome c biogenesis ATP-binding export protein CcmA (211 aa).

The 211-residue stretch at 1-211 folds into the ABC transporter domain; it reads MAIHNLACVR…RMAEATSCFG (211 aa). ATP is bound at residue 33–40; it reads GSNGAGKT.

This sequence belongs to the ABC transporter superfamily. CcmA exporter (TC 3.A.1.107) family. As to quaternary structure, the complex is composed of two ATP-binding proteins (CcmA) and two transmembrane proteins (CcmB).

Its subcellular location is the cell inner membrane. It catalyses the reaction heme b(in) + ATP + H2O = heme b(out) + ADP + phosphate + H(+). Part of the ABC transporter complex CcmAB involved in the biogenesis of c-type cytochromes; once thought to export heme, this seems not to be the case, but its exact role is uncertain. Responsible for energy coupling to the transport system. The polypeptide is Cytochrome c biogenesis ATP-binding export protein CcmA (Sodalis glossinidius (strain morsitans)).